Here is a 520-residue protein sequence, read N- to C-terminus: Trichothecene O-acetyltransferase TRI3 (520 aa).

The segment at 1-23 (MGSKLPELPKLSPEKHRWEKSNV) is disordered. Positions 12–23 (SPEKHRWEKSNV) are enriched in basic and acidic residues.

The protein belongs to the trichothecene O-acetyltransferase family.

The protein operates within sesquiterpene biosynthesis; trichothecene biosynthesis. Functionally, trichothecene O-acetyltransferase; part of the gene cluster that mediates the production of the antimicrobial trichothecene harzianum A (HA) that plays a role in Botrytis cinerea antagonistic activity and plant defense priming. The biosynthesis of harzianum A begins with the cyclization of farnesyl diphosphate to trichodiene and is catalyzed by the trichodiene synthase TRI5. Trichodiene undergoes a series of oxygenations catalyzed by the cytochrome P450 monooxygenase TRI4. TRI4 controls the addition of 3 oxygens at C-2, C-11, and the C-12, C-13-epoxide to form the intermediate isotrichodiol. Isotrichodiol then undergoes a non-enzymatic isomerization and cyclization to form 12,13-epoxytrichothec-9-ene (EPT) which is further converted to trichodermol by the cytochrome P450 monooxygenase TRI11 via C-4 hydroxylation. The last step of HA synthesis is esterification of an octatriendioyl moiety to the C-4 oxygen of trichodermol. The octatriendioyl moiety is probably produced by the polyketide synthase TRI17 and the esterification performed by the trichothecene O-acetyltransferase TRI3. The chain is Trichothecene O-acetyltransferase TRI3 from Trichoderma arundinaceum.